The chain runs to 286 residues: UPF0761 membrane protein KPN78578_41360 (286 aa).

A run of 7 helical transmembrane segments spans residues 44-64 (LLSL…FPMF), 74-94 (FIFA…IEQF), 104-124 (VGAF…DSAL), 140-160 (FAVY…SLAI), 183-203 (LFPL…VPTT), 210-230 (AVIG…AFAL), and 244-264 (VISV…IVLL).

This sequence belongs to the UPF0761 family.

The protein localises to the cell inner membrane. The sequence is that of UPF0761 membrane protein KPN78578_41360 from Klebsiella pneumoniae subsp. pneumoniae (strain ATCC 700721 / MGH 78578).